We begin with the raw amino-acid sequence, 178 residues long: Ribosome maturation factor RimP (178 aa).

Belongs to the RimP family.

It localises to the cytoplasm. Its function is as follows. Required for maturation of 30S ribosomal subunits. This chain is Ribosome maturation factor RimP, found in Mycolicibacterium gilvum (strain PYR-GCK) (Mycobacterium gilvum (strain PYR-GCK)).